A 287-amino-acid polypeptide reads, in one-letter code: Pyridoxal 5'-phosphate synthase subunit PdxS (287 aa).

D21 is a D-ribose 5-phosphate binding site. The active-site Schiff-base intermediate with D-ribose 5-phosphate is K78. G150 contributes to the D-ribose 5-phosphate binding site. Residue R162 coordinates D-glyceraldehyde 3-phosphate. D-ribose 5-phosphate is bound by residues G211 and 232-233; that span reads GS.

It belongs to the PdxS/SNZ family. In the presence of PdxT, forms a dodecamer of heterodimers.

The enzyme catalyses aldehydo-D-ribose 5-phosphate + D-glyceraldehyde 3-phosphate + L-glutamine = pyridoxal 5'-phosphate + L-glutamate + phosphate + 3 H2O + H(+). It participates in cofactor biosynthesis; pyridoxal 5'-phosphate biosynthesis. Functionally, catalyzes the formation of pyridoxal 5'-phosphate from ribose 5-phosphate (RBP), glyceraldehyde 3-phosphate (G3P) and ammonia. The ammonia is provided by the PdxT subunit. Can also use ribulose 5-phosphate and dihydroxyacetone phosphate as substrates, resulting from enzyme-catalyzed isomerization of RBP and G3P, respectively. The sequence is that of Pyridoxal 5'-phosphate synthase subunit PdxS from Francisella tularensis subsp. tularensis (strain FSC 198).